The primary structure comprises 596 residues: Arginine--tRNA ligase (596 aa).

Positions 127–137 (ANPTGPVHVGR) match the 'HIGH' region motif.

This sequence belongs to the class-I aminoacyl-tRNA synthetase family.

Its subcellular location is the cytoplasm. The catalysed reaction is tRNA(Arg) + L-arginine + ATP = L-arginyl-tRNA(Arg) + AMP + diphosphate. This Haloquadratum walsbyi (strain DSM 16790 / HBSQ001) protein is Arginine--tRNA ligase.